The following is a 66-amino-acid chain: MPKFKTHRASAKRFKKTASGALKRGHAYTSHRFHGKTKKQRRQLRKSALVSHSDMKRIRQMLSQMK.

Basic residues-rich tracts occupy residues 1-16 (MPKF…RFKK) and 23-45 (KRGH…RQLR). Residues 1–66 (MPKFKTHRAS…RIRQMLSQMK (66 aa)) are disordered.

Belongs to the bacterial ribosomal protein bL35 family.

In Lacticaseibacillus casei (strain BL23) (Lactobacillus casei), this protein is Large ribosomal subunit protein bL35.